Consider the following 83-residue polypeptide: Cytochrome b559 subunit alpha (83 aa).

Residues 21-35 (VIHSITIPSLFIAGW) form a helical membrane-spanning segment. H23 is a binding site for heme.

The protein belongs to the PsbE/PsbF family. As to quaternary structure, heterodimer of an alpha subunit and a beta subunit. PSII is composed of 1 copy each of membrane proteins PsbA, PsbB, PsbC, PsbD, PsbE, PsbF, PsbH, PsbI, PsbJ, PsbK, PsbL, PsbM, PsbT, PsbX, PsbY, PsbZ, Psb30/Ycf12, at least 3 peripheral proteins of the oxygen-evolving complex and a large number of cofactors. It forms dimeric complexes. Heme b serves as cofactor.

It localises to the plastid. Its subcellular location is the chloroplast thylakoid membrane. This b-type cytochrome is tightly associated with the reaction center of photosystem II (PSII). PSII is a light-driven water:plastoquinone oxidoreductase that uses light energy to abstract electrons from H(2)O, generating O(2) and a proton gradient subsequently used for ATP formation. It consists of a core antenna complex that captures photons, and an electron transfer chain that converts photonic excitation into a charge separation. This chain is Cytochrome b559 subunit alpha, found in Physcomitrium patens (Spreading-leaved earth moss).